We begin with the raw amino-acid sequence, 449 residues long: MLSSQTSSIFTVSRLNQTVRLLLEQEMGQVWISGEISNFTQPASGHWYFTLKDDTAQVRCAMFRNSNRRVTFRPQHGQQVLVRANITLYEPRGDYQIIAESMQPAGEGLLQQKYEQLKAKLQAEGLFDQQHKQPLPSPAHCVGVITSKTGAALHDILHVLKRRDPSLPVIIYPTAVQGDDAPGQIVRAIELANARGECDVLIVGRGGGSLEDLWSFNDERVARAIFASRIPVVSAVGHETDVTIADFVADLRAPTPSAAAEIVSRNQQELLRQIQSAQQRLGMAMDYYLANRSRRFTQIFHRLQQQHPQLRLARQQTALERLRQRMGFALEARIKQANQRQQCVSQRLSQQNPQPRIHRAQSRIQQLEYRLTENIRSRLSEQRERFGNAVTHLEAVSPLATLARGYTVSTTTDGKVLKKIKQVKAGDIMTTRLEDGWLESEVKSVTPGT.

This sequence belongs to the XseA family. Heterooligomer composed of large and small subunits.

It is found in the cytoplasm. It carries out the reaction Exonucleolytic cleavage in either 5'- to 3'- or 3'- to 5'-direction to yield nucleoside 5'-phosphates.. Bidirectionally degrades single-stranded DNA into large acid-insoluble oligonucleotides, which are then degraded further into small acid-soluble oligonucleotides. This Salmonella typhimurium (strain LT2 / SGSC1412 / ATCC 700720) protein is Exodeoxyribonuclease 7 large subunit.